The primary structure comprises 376 residues: Flap endonuclease 1 (376 aa).

The tract at residues 1–105 (MGIKGLSKLL…GELNKRKENA (105 aa)) is N-domain. D34 serves as a coordination point for Mg(2+). R47 and R71 together coordinate DNA. The Mg(2+) site is built by D87, E159, E161, D180, and D182. Residues 123–254 (QAKKLMKRTA…ITAFELIQQY (132 aa)) are I-domain. E159 contributes to the DNA binding site. Residues G232 and D234 each coordinate DNA. D234 contributes to the Mg(2+) binding site. Residues 336–344 (AQGRLDSFF) are interaction with PCNA. Residues 352-376 (SKSEAASGVKRKKPTTKAKESRKKK) are disordered. Over residues 360–376 (VKRKKPTTKAKESRKKK) the composition is skewed to basic residues.

The protein belongs to the XPG/RAD2 endonuclease family. FEN1 subfamily. In terms of assembly, interacts with PCNA. Three molecules of FEN1 bind to one PCNA trimer with each molecule binding to one PCNA monomer. PCNA stimulates the nuclease activity without altering cleavage specificity. The cofactor is Mg(2+). Phosphorylated. Phosphorylation upon DNA damage induces relocalization to the nuclear plasma.

The protein localises to the nucleus. The protein resides in the nucleolus. It is found in the nucleoplasm. Its subcellular location is the mitochondrion. Structure-specific nuclease with 5'-flap endonuclease and 5'-3' exonuclease activities involved in DNA replication and repair. During DNA replication, cleaves the 5'-overhanging flap structure that is generated by displacement synthesis when DNA polymerase encounters the 5'-end of a downstream Okazaki fragment. It enters the flap from the 5'-end and then tracks to cleave the flap base, leaving a nick for ligation. Also involved in the long patch base excision repair (LP-BER) pathway, by cleaving within the apurinic/apyrimidinic (AP) site-terminated flap. Acts as a genome stabilization factor that prevents flaps from equilibrating into structures that lead to duplications and deletions. Also possesses 5'-3' exonuclease activity on nicked or gapped double-stranded DNA, and exhibits RNase H activity. Also involved in replication and repair of rDNA and in repairing mitochondrial DNA. This Entamoeba dispar (strain ATCC PRA-260 / SAW760) protein is Flap endonuclease 1.